The following is a 320-amino-acid chain: Homoserine kinase (320 aa).

ATP is bound at residue Pro100–Ala110.

Belongs to the GHMP kinase family. Homoserine kinase subfamily.

The protein resides in the cytoplasm. The catalysed reaction is L-homoserine + ATP = O-phospho-L-homoserine + ADP + H(+). It functions in the pathway amino-acid biosynthesis; L-threonine biosynthesis; L-threonine from L-aspartate: step 4/5. Catalyzes the ATP-dependent phosphorylation of L-homoserine to L-homoserine phosphate. The polypeptide is Homoserine kinase (Chlorobium phaeobacteroides (strain DSM 266 / SMG 266 / 2430)).